Here is a 103-residue protein sequence, read N- to C-terminus: Co-chaperonin GroES (103 aa).

This sequence belongs to the GroES chaperonin family. In terms of assembly, heptamer of 7 subunits arranged in a ring. Interacts with the chaperonin GroEL.

It is found in the cytoplasm. In terms of biological role, together with the chaperonin GroEL, plays an essential role in assisting protein folding. The GroEL-GroES system forms a nano-cage that allows encapsulation of the non-native substrate proteins and provides a physical environment optimized to promote and accelerate protein folding. GroES binds to the apical surface of the GroEL ring, thereby capping the opening of the GroEL channel. In Trichodesmium erythraeum (strain IMS101), this protein is Co-chaperonin GroES.